The following is a 1120-amino-acid chain: Topless-related protein 1 (1120 aa).

The 33-residue stretch at 4–36 folds into the LisH domain; that stretch reads LSRELVFLILQFLDEEKFKETVHKLEQESGFFF. A CTLH domain is found at 34-92; it reads FFFNMKYFEDEVHNGNWDEVEKYLSGFTKVDDNRYSMKIFFEIRKQKYLEALDRHDRPK. Disordered regions lie at residues 210–235 and 283–307; these read ARAP…PLGA and HPRT…SKRT. Ser214 is modified (phosphoserine). 14 WD repeats span residues 353–393, 415–454, 460–501, 504–545, 548–591, 595–634, 639–678, 699–745, 755–794, 822–860, 863–903, 906–945, 999–1038, and 1052–1091; these read SQGS…RLVQ, EPVV…DMRQ, AHVG…KRYT, GHEA…SRVD, APGR…VKRT, FHKR…LLTA, GGLQ…RLLH, ERPA…EPSQ, MRVT…RNAT, NPEE…TMAT, PPPP…VKSK, GHSK…KQKS, ESAA…LRCR, and SNVH…GKWG. The disordered stretch occupies residues 1087-1120; the sequence is EGKWGVAPPPENGSASAVTATPSVGASASDQPQR. Over residues 1099–1120 the composition is skewed to polar residues; the sequence is GSASAVTATPSVGASASDQPQR.

Tetramer. Interacts with SNC1 (via TIR domain) and HDA19. Interacts with SPL (via EAR motif). Interacts with SPEAR3/TIE1. Binds to and corepresses GAF1/IDD2. Highly expressed in stamen primordium, microsporocyte, ovule primordium and megasporocyte during sporogenesis.

Its subcellular location is the nucleus. Transcriptional corepressor. Activates TIR-NB-LRR R protein-mediated immune responses through repression of negative regulators such as CNGC2/DND1. Negative regulator of jasmonate responses. In Arabidopsis thaliana (Mouse-ear cress), this protein is Topless-related protein 1 (TPR1).